The chain runs to 828 residues: MIEKLTIKRSRQKVIAYSVIIIWLMIVNIWLLNNYHLNSSTLTRHGNGDNLIDEDDDSSSSSEYSIYNELDTENYLGQQHQEEDVPNSQSTDNSLIKPTSPAKNSFKDDITIKILQKHLQKQQNNPKDIRTKDSHAEIYNQIFENHPQIDTILGNLNFNQRCQLFFQNLFIKDNNWILNVKDKKIKLENKNDFKFNDFKKSHLNEFKRQFKTMKKLLEPNKIIHNKDFDNSIEFQDFIKMKYEQFWNRTMTYEQKIVDSISILRIFNKCYLIEEATSTTTTKNNKQDFIKDQFKLVDGIRRASKKNPSLPKFKPTKQEQMVNFDNENLSPSILEHRVYPWLSFEYPVYERWTGKVQYQPPKMANYVKDGNQKTTKKTKYNNDKYLSSFFLNRLKQKCNGRGLVLSISDLHVDVTVRLIHLLRALNNRYPIQIVYYDNLSKETKEKIVTAAREVMSHVPKSFERVAKYFPDDYLDNDQGGLPKQEIWFINTYNVIHADYKLQFRGFANKFLATLFNSFDEFILLDADTVLTQSPSYFFNLPQYLETGTFFYKDRTTYETRPKSDSIFFEKLGPSVIDSVMFNIPIMTSYTLNRSFFKGLFHYMESGLVVLNRDMHYSSFLTMVQMNFFEPVNSRIHGDKEIFWLAMAINGKQNYYFDENYAAAVGVMTPDIERTKPDKTLHESKELCSPHPGHISHDDNSLVWLNSGFFYCGQNDKVKFVEEFKHKSRLKHLNTLEAFKTFYYSPLRIENAIIPPMDLDIWAANNEDEPAKGWFGDPRYCSGYMWCAYDKIGGKTKSGKNTRLEGKIINFDEQAQDLFNYYGDVWVGME.

The Cytoplasmic portion of the chain corresponds to 1–13 (MIEKLTIKRSRQK). The helical transmembrane segment at 14–34 (VIAYSVIIIWLMIVNIWLLNN) threads the bilayer. Residues 35–828 (YHLNSSTLTR…YYGDVWVGME (794 aa)) lie on the Lumenal side of the membrane. Residue N38 is glycosylated (N-linked (GlcNAc...) asparagine). The tract at residues 80 to 104 (HQEEDVPNSQSTDNSLIKPTSPAKN) is disordered. Residues 86 to 103 (PNSQSTDNSLIKPTSPAK) show a composition bias toward polar residues. 3 N-linked (GlcNAc...) asparagine glycosylation sites follow: N247, N437, and N591.

The protein belongs to the MNN1/MNT family.

Its subcellular location is the golgi apparatus membrane. Its pathway is protein modification; protein glycosylation. Responsible for addition of the terminal mannose residues to the outer chain of core N-linked polysaccharides and to O-linked mannotriose. Implicated in late Golgi modifications. The polypeptide is Putative alpha-1,3-mannosyltransferase MNN12 (MNN12) (Candida albicans (strain SC5314 / ATCC MYA-2876) (Yeast)).